Reading from the N-terminus, the 96-residue chain is UPF0298 protein LCA_1075 (96 aa).

The protein belongs to the UPF0298 family.

The protein localises to the cytoplasm. This is UPF0298 protein LCA_1075 from Latilactobacillus sakei subsp. sakei (strain 23K) (Lactobacillus sakei subsp. sakei).